The sequence spans 61 residues: Large ribosomal subunit protein uL30 (61 aa).

It belongs to the universal ribosomal protein uL30 family. In terms of assembly, part of the 50S ribosomal subunit.

This Bifidobacterium adolescentis (strain ATCC 15703 / DSM 20083 / NCTC 11814 / E194a) protein is Large ribosomal subunit protein uL30.